Reading from the N-terminus, the 416-residue chain is Cotranscriptional regulator ARB2A (416 aa).

The N-terminal stretch at 1-18 (MSISLSSLILLPIWINMA) is a signal peptide. Residues 208 to 247 (KPKIHVQSSSDSSDEPAEKRERKDKVSKETKKRRDFYEKY) are disordered. Over residues 223 to 236 (PAEKRERKDKVSKE) the composition is skewed to basic and acidic residues. The active-site Nucleophile is serine 293. A Prevents secretion from ER motif is present at residues 413-416 (HEEL).

The protein belongs to the ARB2A family. As to quaternary structure, interacts with AGO2. Found in a complex, composed of AGO2, CHD7 and ARB2A.

It is found in the nucleus. The protein resides in the cytoplasm. It localises to the endoplasmic reticulum. Plays a role in the regulation of alternative splicing, by interacting with AGO2 and CHD7. Seems to be required for stabilizing protein-protein interactions at the chromatin-spliceosome interface. May have hydrolase activity. This chain is Cotranscriptional regulator ARB2A, found in Homo sapiens (Human).